The sequence spans 830 residues: MNLKQFTCLSCAQLLAILLFIFAFFPRKIVLTGISKQDPDQDRDLQRDRPFQKLVFVIIDALRSDFLFDSQISHFNNVHQWLNTGEAWGYTSFANPPTVTLPRLKSITTGSTPSFIDLLLNVAQDIDSNDLSEHDSWLQQFIQHNNTIRFMGDDTWLKLFPQQWFDFADPTHSFFVSDFTQVDNNVTRNLPGKLFQEWAQWDVAILHYLGLDHIGHKDGPHSKFMAAKHQEMDSILKSIYDEVLEHEDDDDTLICVLGDHGMNELGNHGGSSAGETSAGLLFLSPKLAQFARPESQVNYTLPINASPDWNFQYLETVQQIDIVPTIAALFGMPIPMNSVGIIIPDFLQLLPNKLASMKENFMHLWKLSDHHGEVALDDFTAEDIYTKMYTIQETLTKSATNYNYPLLTLAFVGFLIITIIAIYVLLRYSGPDFWQLRVSSLSVLLVSIILGVSTFASSFIEEEHQLWWWIVTAFSAVPLFVYRLNVLIIVRWFIMMACVRSIKFWNNSGQKFIYSNVMSNLLNQNPSWKWCLNMLTFLVLIMASAGFQVLHFIVTTILVGLCFTYKISWEIVNGNQAEIPLFMHDLLAKIDFAPTESNLIVLARVFFQAWAIVVISRLVLTKLKVLNKNYLIKDMKVYITILLMFQTSSQNIGQFLVFQILESQIFYFFQNIPTASLTSTSKIYFSNLVSLILQNFTFFQFGGTNSISTIDLGNAYHGVSSDYNIYVVGILMSVANFAPAIYWSMLPWSINYASIPAQVKLQTFIRSKLPAFTYHCIFGTCLMTACVVLRFHLFIWSVFSPKLCYFLGWNFVMGLLNGWLPELALLCALD.

An N-terminal signal peptide occupies residues 1-32 (MNLKQFTCLSCAQLLAILLFIFAFFPRKIVLT). Residues 33–321 (GISKQDPDQD…QYLETVQQID (289 aa)) are Lumenal-facing. N-linked (GlcNAc...) asparagine glycosylation is found at asparagine 145, asparagine 185, and asparagine 298. The chain crosses the membrane as a helical span at residues 322-342 (IVPTIAALFGMPIPMNSVGII). Residues 343 to 405 (IPDFLQLLPN…TKSATNYNYP (63 aa)) lie on the Cytoplasmic side of the membrane. Residues 406–426 (LLTLAFVGFLIITIIAIYVLL) form a helical membrane-spanning segment. Residues 427–439 (RYSGPDFWQLRVS) lie on the Lumenal side of the membrane. Residues 440–460 (SLSVLLVSIILGVSTFASSFI) form a helical membrane-spanning segment. The Cytoplasmic segment spans residues 461 to 469 (EEEHQLWWW). A helical membrane pass occupies residues 470-490 (IVTAFSAVPLFVYRLNVLIIV). At 491–533 (RWFIMMACVRSIKFWNNSGQKFIYSNVMSNLLNQNPSWKWCLN) the chain is on the lumenal side. Residue asparagine 506 is glycosylated (N-linked (GlcNAc...) asparagine). Residues 534-554 (MLTFLVLIMASAGFQVLHFIV) form a helical membrane-spanning segment. At 555–598 (TTILVGLCFTYKISWEIVNGNQAEIPLFMHDLLAKIDFAPTESN) the chain is on the cytoplasmic side. A helical membrane pass occupies residues 599 to 619 (LIVLARVFFQAWAIVVISRLV). The Lumenal segment spans residues 620 to 651 (LTKLKVLNKNYLIKDMKVYITILLMFQTSSQN). The chain crosses the membrane as a helical span at residues 652–672 (IGQFLVFQILESQIFYFFQNI). Topologically, residues 673 to 682 (PTASLTSTSK) are cytoplasmic. The helical transmembrane segment at 683-703 (IYFSNLVSLILQNFTFFQFGG) threads the bilayer. Over 704 to 724 (TNSISTIDLGNAYHGVSSDYN) the chain is Lumenal. The chain crosses the membrane as a helical span at residues 725–745 (IYVVGILMSVANFAPAIYWSM). Residues 746 to 768 (LPWSINYASIPAQVKLQTFIRSK) are Cytoplasmic-facing. The chain crosses the membrane as a helical span at residues 769-789 (LPAFTYHCIFGTCLMTACVVL). Residues 790–805 (RFHLFIWSVFSPKLCY) are Lumenal-facing. The helical transmembrane segment at 806–826 (FLGWNFVMGLLNGWLPELALL) threads the bilayer. Residues 827–830 (CALD) lie on the Cytoplasmic side of the membrane.

Belongs to the PIGG/PIGN/PIGO family. PIGG subfamily. Post-translationally, N-glycosylated.

It is found in the endoplasmic reticulum membrane. It functions in the pathway glycolipid biosynthesis; glycosylphosphatidylinositol-anchor biosynthesis. In terms of biological role, ethanolamine phosphate transferase involved in glycosylphosphatidylinositol-anchor biosynthesis. Transfers ethanolamine phosphate to the GPI second mannose. Although not essential, addition of ethanolamine phosphate to the second mannose plays an important role in cell separation via the GPI-based modification of daughter-specific proteins. The protein is GPI ethanolamine phosphate transferase 2 (LAS21) of Saccharomyces cerevisiae (strain ATCC 204508 / S288c) (Baker's yeast).